Here is a 299-residue protein sequence, read N- to C-terminus: MPT51/MPB51 antigen (299 aa).

The first 26 residues, 1 to 26, serve as a signal peptide directing secretion; sequence MKGRSALLRALWIAALSFGLGGVAVA.

This sequence belongs to the mycobacterial A85 antigen family. In terms of assembly, homodimer.

The protein localises to the secreted. May have a role in host tissue attachment, whereby ligands may include the serum protein fibronectin and small sugars. This is MPT51/MPB51 antigen (mpt51) from Mycobacterium bovis (strain ATCC BAA-935 / AF2122/97).